The chain runs to 320 residues: o-succinylbenzoate synthase (320 aa).

Lys-133 (proton donor) is an active-site residue. Asp-161, Glu-190, and Asp-213 together coordinate Mg(2+). Lys-235 (proton acceptor) is an active-site residue.

This sequence belongs to the mandelate racemase/muconate lactonizing enzyme family. MenC type 1 subfamily. A divalent metal cation is required as a cofactor.

It carries out the reaction (1R,6R)-6-hydroxy-2-succinyl-cyclohexa-2,4-diene-1-carboxylate = 2-succinylbenzoate + H2O. It participates in quinol/quinone metabolism; 1,4-dihydroxy-2-naphthoate biosynthesis; 1,4-dihydroxy-2-naphthoate from chorismate: step 4/7. The protein operates within quinol/quinone metabolism; menaquinone biosynthesis. Functionally, converts 2-succinyl-6-hydroxy-2,4-cyclohexadiene-1-carboxylate (SHCHC) to 2-succinylbenzoate (OSB). The polypeptide is o-succinylbenzoate synthase (Escherichia coli O17:K52:H18 (strain UMN026 / ExPEC)).